The sequence spans 67 residues: Large ribosomal subunit protein uL29 (67 aa).

The protein belongs to the universal ribosomal protein uL29 family.

The chain is Large ribosomal subunit protein uL29 from Methanosarcina mazei (strain ATCC BAA-159 / DSM 3647 / Goe1 / Go1 / JCM 11833 / OCM 88) (Methanosarcina frisia).